The chain runs to 161 residues: uncharacterized protein (161 aa).

The interval 126–161 (TPSNCGESSTSSGQSSGDESNCSLRTHGVYTRGEQH) is disordered. The segment covering 128–148 (SNCGESSTSSGQSSGDESNCS) has biased composition (low complexity).

This sequence belongs to the herpesviridae US1 family.

This is an uncharacterized protein from Human cytomegalovirus (strain AD169) (HHV-5).